We begin with the raw amino-acid sequence, 404 residues long: NADH-quinone oxidoreductase subunit D 2 (404 aa).

The protein belongs to the complex I 49 kDa subunit family. In terms of assembly, NDH-1 is composed of 14 different subunits. Subunits NuoB, C, D, E, F, and G constitute the peripheral sector of the complex.

The protein localises to the cell inner membrane. It catalyses the reaction a quinone + NADH + 5 H(+)(in) = a quinol + NAD(+) + 4 H(+)(out). Functionally, NDH-1 shuttles electrons from NADH, via FMN and iron-sulfur (Fe-S) centers, to quinones in the respiratory chain. The immediate electron acceptor for the enzyme in this species is believed to be ubiquinone. Couples the redox reaction to proton translocation (for every two electrons transferred, four hydrogen ions are translocated across the cytoplasmic membrane), and thus conserves the redox energy in a proton gradient. The sequence is that of NADH-quinone oxidoreductase subunit D 2 from Rhizobium meliloti (strain 1021) (Ensifer meliloti).